The chain runs to 372 residues: Type II methyltransferase M1.HphI (372 aa).

The SAM-dependent MTase C5-type domain maps to 45–372; sequence LTYIDLFSGA…EAVLKMNTNE (328 aa). The active site involves Cys-122.

Belongs to the class I-like SAM-binding methyltransferase superfamily. C5-methyltransferase family.

It catalyses the reaction a 2'-deoxycytidine in DNA + S-adenosyl-L-methionine = a 5-methyl-2'-deoxycytidine in DNA + S-adenosyl-L-homocysteine + H(+). Its function is as follows. A methylase that recognizes the double-stranded sequence 5'-GGTGA-3' and protects the DNA from cleavage by the HphI endonuclease. Probably methylates C-2 on the bottom strand. This chain is Type II methyltransferase M1.HphI (hphIAM), found in Haemophilus parahaemolyticus.